Here is a 434-residue protein sequence, read N- to C-terminus: Polyadenylate-binding protein RBP47C' (434 aa).

The segment at 1 to 50 (MADVKVQSESESSDSHPLVDYQSLPPYPPPHPPVEVEENQPKTSPTPPPP) is disordered. RRM domains follow at residues 103 to 185 (KTIW…WASF), 199 to 278 (LSIF…PATP), and 306 to 378 (TTIF…WGRN).

Belongs to the polyadenylate-binding RBP47 family. In terms of assembly, interacts with the poly(A) tail of mRNA in nucleus.

It is found in the nucleus. Its subcellular location is the cytoplasmic granule. Functionally, heterogeneous nuclear ribonucleoprotein (hnRNP)-protein binding the poly(A) tail of mRNA and probably involved in some steps of pre-mRNA maturation. The sequence is that of Polyadenylate-binding protein RBP47C' (RBP47C') from Arabidopsis thaliana (Mouse-ear cress).